Consider the following 328-residue polypeptide: GMP reductase (328 aa).

C176 functions as the Thioimidate intermediate in the catalytic mechanism. 205–228 serves as a coordination point for NADP(+); sequence IIADGGIRTHGDIAKSIRFGASMI.

This sequence belongs to the IMPDH/GMPR family. GuaC type 2 subfamily.

It carries out the reaction IMP + NH4(+) + NADP(+) = GMP + NADPH + 2 H(+). Catalyzes the irreversible NADPH-dependent deamination of GMP to IMP. It functions in the conversion of nucleobase, nucleoside and nucleotide derivatives of G to A nucleotides, and in maintaining the intracellular balance of A and G nucleotides. This is GMP reductase from Streptococcus pneumoniae (strain Taiwan19F-14).